A 98-amino-acid polypeptide reads, in one-letter code: Keratin-associated protein 3-3 (98 aa).

A2 is subject to N-acetylalanine. 3 repeat units span residues 3–7, 8–12, and 47–51. The segment at 3–59 is 3 X 5 AA repeats of C-C-X(3); the sequence is CCAPLCCSARTSPATTICSSDKFCRCGVCLPSTCPHTVWLLEPTCCDNCPPPCHIPQ.

It belongs to the KRTAP type 3 family. Interacts with hair keratins.

Functionally, in the hair cortex, hair keratin intermediate filaments are embedded in an interfilamentous matrix, consisting of hair keratin-associated proteins (KRTAP), which are essential for the formation of a rigid and resistant hair shaft through their extensive disulfide bond cross-linking with abundant cysteine residues of hair keratins. The matrix proteins include the high-sulfur and high-glycine-tyrosine keratins. This is Keratin-associated protein 3-3 from Bos taurus (Bovine).